Consider the following 987-residue polypeptide: KAT8 regulatory NSL complex subunit 1-like protein (987 aa).

Lysine 134 participates in a covalent cross-link: Glycyl lysine isopeptide (Lys-Gly) (interchain with G-Cter in SUMO2). Serine 462 is modified (phosphoserine). The tract at residues 708-738 (RKKRHLSETALGERTKLEESDFQHTESGSHS) is disordered. The span at 718–731 (LGERTKLEESDFQH) shows a compositional bias: basic and acidic residues. Positions 794–915 (EILTPSWRMV…QSQETKSLWW (122 aa)) constitute a PEHE domain. Lysine 859 is subject to N6-acetyllysine. Residues 949–972 (GEIFGTSVPENGHHPKKQSDGMEE) are disordered. Positions 959–972 (NGHHPKKQSDGMEE) are enriched in basic and acidic residues.

In terms of processing, acetylated on lysine residues by KAT8 upon ionizing radiation-induced DNA damage; deacetylated by HDAC3.

In Homo sapiens (Human), this protein is KAT8 regulatory NSL complex subunit 1-like protein (KANSL1L).